We begin with the raw amino-acid sequence, 373 residues long: MIWKQPPRRMGEMGGSLSRRFGNAAASWAVWRVSRSCFSLLFFFYFFLFFSSSSLLPTTNNYQHLQLHSLIPTLNTTAHLPHQQASSASMKASLFLACSALGLALATPTQDAPETVNNPLGIVYQAKLPETSRTGIRGTINATAHSSGRGVVFNLDLWGFDNTEGPFRKLHTCFDQTNKQTNKIVKLTTTTAYHIHVDPVPTDGSCGPTKDHLDPFGRGQTPPCDDSLPQTCEPGDLSGKFGRLTTSSMEEHFNQTFHDLYTSTRPGLGTFFGNRSIVIHHRNSTRLTCANFTLVEQPGTSTTYVPRPTGTGIISSIFPTGTGAISTSGHAPTISATYTPTPTPSPPAQNNGAGRLVGFSLGAIMAALVPLAL.

The first 55 residues, 1–55 (MIWKQPPRRMGEMGGSLSRRFGNAAASWAVWRVSRSCFSLLFFFYFFLFFSSSSL), serve as a signal peptide directing secretion. N-linked (GlcNAc...) asparagine glycosylation is found at Asn-75 and Asn-141. The Cu cation site is built by His-194, His-196, and His-212. Cysteines 206 and 289 form a disulfide. N-linked (GlcNAc...) asparagine glycans are attached at residues Asn-254 and Asn-274. Position 280 (His-280) interacts with Cu cation. Asn-283 and Asn-291 each carry an N-linked (GlcNAc...) asparagine glycan. The interval 329-348 (GHAPTISATYTPTPTPSPPA) is disordered. Residues 331–340 (APTISATYTP) are compositionally biased toward low complexity. The GPI-anchor amidated glycine moiety is linked to residue Gly-352. A propeptide spans 353–373 (AGRLVGFSLGAIMAALVPLAL) (removed in mature form).

This sequence belongs to the Cu-Zn superoxide dismutase family. As to quaternary structure, monomer. It depends on Cu cation as a cofactor. In terms of processing, the GPI-anchor is attached to the protein in the endoplasmic reticulum and serves to target the protein to the cell surface. There, the glucosamine-inositol phospholipid moiety is cleaved off and the GPI-modified mannoprotein is covalently attached via its lipidless GPI glycan remnant to the 1,6-beta-glucan of the outer cell wall layer.

The protein resides in the secreted. It localises to the cell wall. Its subcellular location is the cell membrane. The catalysed reaction is 2 superoxide + 2 H(+) = H2O2 + O2. In terms of biological role, superoxide dismutases serve to convert damaging superoxide radicals, a key form of ROS, to less damaging hydrogen peroxide that can be converted into water by catalase action. Degrades host-derived reactive oxygen species to escape innate immune surveillance. Involved in the occurrence of miconazole-tolerant persisters in biofilms. Persisters are cells that survive high doses of an antimicrobial agent. The unusual attributes of SOD5-like fungal proteins, including the absence of zinc and an open active site that readily captures extracellular copper, make these SODs well suited to meet challenges in zinc and copper availability at the host-pathogen interface. This is Cell surface Cu-only superoxide dismutase ARB_03674 from Arthroderma benhamiae (strain ATCC MYA-4681 / CBS 112371) (Trichophyton mentagrophytes).